The sequence spans 121 residues: Phosphoribosyl-AMP cyclohydrolase (121 aa).

Position 74 (aspartate 74) interacts with Mg(2+). Cysteine 75 contacts Zn(2+). Mg(2+)-binding residues include aspartate 76 and aspartate 78. Cysteine 91 and cysteine 98 together coordinate Zn(2+).

It belongs to the PRA-CH family. In terms of assembly, homodimer. The cofactor is Mg(2+). Requires Zn(2+) as cofactor.

Its subcellular location is the cytoplasm. The catalysed reaction is 1-(5-phospho-beta-D-ribosyl)-5'-AMP + H2O = 1-(5-phospho-beta-D-ribosyl)-5-[(5-phospho-beta-D-ribosylamino)methylideneamino]imidazole-4-carboxamide. It functions in the pathway amino-acid biosynthesis; L-histidine biosynthesis; L-histidine from 5-phospho-alpha-D-ribose 1-diphosphate: step 3/9. In terms of biological role, catalyzes the hydrolysis of the adenine ring of phosphoribosyl-AMP. The sequence is that of Phosphoribosyl-AMP cyclohydrolase from Methanothrix thermoacetophila (strain DSM 6194 / JCM 14653 / NBRC 101360 / PT) (Methanosaeta thermophila).